The primary structure comprises 185 residues: Lectin B4 (185 aa).

A glycan (N-linked (GlcNAc...) asparagine) is linked at asparagine 48. Residues glutamate 111 and aspartate 113 each contribute to the Mn(2+) site. Residues aspartate 113, tyrosine 115, asparagine 117, and aspartate 120 each coordinate Ca(2+). Aspartate 120 is a binding site for Mn(2+). N-linked (GlcNAc...) asparagine glycosylation is present at asparagine 122. Residue histidine 125 participates in Mn(2+) binding.

This sequence belongs to the leguminous lectin family. Homo- or heterotetramer. V.villosa isolectins are composed of either two subunits a and two subunits B (A2B2), four subunits A (A4), or four subunits B (B4). The predominant form, isolectin B4, has no A1 erythrocyte agglutinating activity.

In terms of biological role, N-acetyl-D-galactosamine specific lectin. Binds the Tn determinant (GalNAc-alpha-O-Ser/Thr) of the tumor-associated glycopeptide. Could be required for agglutinating cells such as Tn-exposed erythrocytes. The protein is Lectin B4 of Vicia villosa (Hairy vetch).